A 103-amino-acid chain; its full sequence is Small ubiquitin-related modifier 3 (103 aa).

Residues Lys5 and Lys7 each participate in a glycyl lysine isopeptide (Lys-Gly) (interchain with G-Cter in SUMO2) cross-link. Lys11 participates in a covalent cross-link: Glycyl lysine isopeptide (Lys-Gly) (interchain with G-Cter in SUMO); alternate. Residue Lys11 forms a Glycyl lysine isopeptide (Lys-Gly) (interchain with G-Cter in SUMO2); alternate linkage. One can recognise a Ubiquitin-like domain in the interval 15 to 92 (DHINLKVAGQ…IDVFQQQTGG (78 aa)). Residue Gly92 forms a Glycyl lysine isopeptide (Gly-Lys) (interchain with K-? in acceptor proteins) linkage. Residues 93–103 (VPESSLAGHSF) constitute a propeptide that is removed on maturation.

This sequence belongs to the ubiquitin family. SUMO subfamily. As to quaternary structure, covalently attached to a number of proteins. Interacts with BMAL1. Interacts with USP25 (via ts SIM domain); the interaction sumoylates USP25 and inhibits its ubiquitin hydrolyzing activity. Interacts with SAE2 and UBE2I. In terms of processing, polymeric chains can be formed through Lys-11 cross-linking. Post-translationally, cleavage of precursor form by SENP1, SENP2 or SENP5 is necessary for function. As to expression, expressed predominantly in liver.

Its subcellular location is the cytoplasm. The protein resides in the nucleus. It is found in the PML body. Functionally, ubiquitin-like protein which can be covalently attached to target lysines either as a monomer or as a lysine-linked polymer. Does not seem to be involved in protein degradation and may function as an antagonist of ubiquitin in the degradation process. Plays a role in a number of cellular processes such as nuclear transport, DNA replication and repair, mitosis and signal transduction. Covalent attachment to its substrates requires prior activation by the E1 complex SAE1-SAE2 and linkage to the E2 enzyme UBE2I, and can be promoted by an E3 ligase such as PIAS1-4, RANBP2 or CBX4. Plays a role in the regulation of sumoylation status of SETX. In Homo sapiens (Human), this protein is Small ubiquitin-related modifier 3.